A 60-amino-acid chain; its full sequence is UPF0434 protein Aave_2563 (60 aa).

This sequence belongs to the UPF0434 family.

The polypeptide is UPF0434 protein Aave_2563 (Paracidovorax citrulli (strain AAC00-1) (Acidovorax citrulli)).